Consider the following 115-residue polypeptide: uncharacterized protein (115 aa).

Positions 90 to 100 are enriched in basic residues; sequence THFGRPATRRR. Residues 90 to 115 form a disordered region; it reads THFGRPATRRRPLGEREVNPSARSLG.

This is an uncharacterized protein from Saccharomyces cerevisiae (strain ATCC 204508 / S288c) (Baker's yeast).